The primary structure comprises 348 residues: N-formyl peptide receptor 2 (348 aa).

N1 carries an N-linked (GlcNAc...) asparagine glycan. Over 1-24 (NFSTPLNEHEEVSYESAGYTVLQI) the chain is Extracellular. A helical membrane pass occupies residues 25–47 (LPLVVLGVTFVLGVLGNGLVIWV). Residues 48–58 (AGFRMTRTVTT) are Cytoplasmic-facing. Residues 59-80 (ICYLNLPLADFSFTATLPFLIV) form a helical membrane-spanning segment. Residues 81-97 (SMAMGEKWPFGWFLCKL) lie on the Extracellular side of the membrane. C95 and C173 are oxidised to a cystine. The helical transmembrane segment at 98-118 (IHIVVDINLFGSVFLIGFIAL) threads the bilayer. The Cytoplasmic portion of the chain corresponds to 119 to 137 (DRCICVLHPVWAQNHRTVS). Residues 138-159 (LAMKVIIGPWILALVLTLPVFL) traverse the membrane as a helical segment. Residues 160–202 (FLTTVTIPNGDTYCTFNFASWGGTPEERKNVAITMLTARGIIR) lie on the Extracellular side of the membrane. A helical membrane pass occupies residues 203–223 (FVIGFSMPMSIVAICYGLIAA). The Cytoplasmic segment spans residues 224–239 (KIHKKGMIKSSRPLRV). The helical transmembrane segment at 240 to 263 (LTAVVASFFICWFPFQLVALLSTV) threads the bilayer. Over 264–283 (WLKEMLFYGKYKIINILVNP) the chain is Extracellular. The chain crosses the membrane as a helical span at residues 284–303 (TSSLAFFNSCLNPMLYVFVG). Over 304–348 (QDFRERLIRSLPTSLERALSEDSAPTNDTAAKCASPPAETELQAM) the chain is Cytoplasmic. The tract at residues 323–348 (SEDSAPTNDTAAKCASPPAETELQAM) is disordered.

Belongs to the G-protein coupled receptor 1 family. In terms of assembly, interacts with APP; the interaction takes place at the cell surface and the complex is then rapidly internalized.

It is found in the cell membrane. Low affinity receptor for N-formyl-methionyl peptides, which are powerful neutrophil chemotactic factors. Binding of FMLP to the receptor causes activation of neutrophils. This response is mediated via a G-protein that activates a phosphatidylinositol-calcium second messenger system. Receptor for the chemokine-like protein FAM19A5, mediating FAM19A5-stimulated macrophage chemotaxis and the inhibitory effect on TNFSF11/RANKL-induced osteoclast differentiation. The polypeptide is N-formyl peptide receptor 2 (FPR2) (Pongo pygmaeus (Bornean orangutan)).